Reading from the N-terminus, the 2439-residue chain is Mucin-6 (2439 aa).

An N-terminal signal peptide occupies residues 1 to 22 (MVQRWLLLSCCGALLSAGLANT). Residues 43–214 (GQCSTWGAGH…KLDDPGEICT (172 aa)) form the VWFD 1 domain. 2 disulfides stabilise this stretch: C45–C176 and C67–C213. N268 carries N-linked (GlcNAc...) asparagine glycosylation. The region spanning 302-357 (CPANQVYQECGSACVKTCSNPQHSCSSSCTFGCFCPEGTVLNDLSNNHTCVPVTQC) is the TIL domain. The region spanning 395–579 (GHCSLEGGSF…ALERETDPCS (185 aa)) is the VWFD 2 domain. Intrachain disulfides connect C397–C533 and C419–C578. N486 and N659 each carry an N-linked (GlcNAc...) asparagine glycan. Residues 866–1038 (STCTLYGEGH…NSWKESPLCG (173 aa)) enclose the VWFD 3 domain. Intrachain disulfides connect C868–C1002, C890–C1037, C899–C999, and C917–C924. N-linked (GlcNAc...) asparagine glycosylation is found at N975 and N1179. Disordered regions lie at residues 1202 to 1455 (PQPP…TSLV), 1471 to 1626 (ATSA…LVTP), 1642 to 1834 (SASI…HPHT), 1868 to 1983 (SIHS…STGP), 2033 to 2077 (ATSA…THSS), 2090 to 2196 (SSSW…SASP), 2233 to 2278 (VSPT…SLTT), and 2323 to 2348 (LTAHGSTPASAPVSSLGTPTPTSPGV). Residues 1224-1265 (TGTSTTIGLLSSTGPSPSSNHTPASPTQTPLLPATLTSSKPT) show a composition bias toward low complexity. A compositionally biased stretch (polar residues) spans 1276-1286 (TAVTPQATSGL). A compositionally biased stretch (low complexity) spans 1294–1339 (STATKPTVTQATTRATASTASPATTSTAQSTTRTTMTLPTPATSGT). Polar residues predominate over residues 1340–1351 (SPTLPKSTNQEL). Low complexity-rich tracts occupy residues 1352-1373 (PGTTATQTTGPRPTPASTTGPT) and 1381-1415 (TRPTATETTQTRTTTEYTTPQTPHTTHSPPTAGSP). Polar residues-rich tracts occupy residues 1416-1455 (VPSTGPVTATSFHATTTYPTPSHPETTLPTHVPPFSTSLV), 1471-1481 (ATSASNHSAPT), and 1490-1520 (LKATGSTHTAPPITPTTSGTSQAHSSFSTNK). Low complexity-rich tracts occupy residues 1521-1567 (TPTS…ATSS) and 1574-1611 (TTHSPPTGSSPFSSTGPMTATSFKTTTTYPTPSHPQTT). Residues 1561 to 1738 (TNSATSSRPP…TTSGTSQSRS (178 aa)) form a 1; truncated repeat. The segment at 1607-1953 (HPQTTLPTHV…STGTRTPVAH (347 aa)) is approximate repeats. Positions 1659-1686 (LKATGSTHTAPTMTLTTSGTSQALSSLN) are enriched in polar residues. The segment covering 1687-1768 (TAKTSTSLHS…PEVTSTSTTS (82 aa)) has biased composition (low complexity). Positions 1769–1793 (ITPNHTSTGTRTPVAHTTSATSSRL) are enriched in polar residues. Repeat 2 spans residues 1785-1953 (TTSATSSRLP…STGTRTPVAH (169 aa)). 2 stretches are compositionally biased toward low complexity: residues 1794 to 1834 (PTPF…HPHT) and 1891 to 1917 (TAPPMTPTTSGTSQSPSSFSTAKTSTS). Residues 1918 to 1962 (LPYHTSSTHHPEVTPTSTTNITPKHTSTGTRTPVAHTTSASSSRL) are compositionally biased toward polar residues. Positions 1963 to 1983 (PTPFTTHSPPTGSSPFSSTGP) are enriched in low complexity. The span at 2052–2070 (LKATGSTHTAPPMTVTTSG) shows a compositional bias: polar residues. The span at 2090–2102 (SSSWLPQNSSSRP) shows a compositional bias: low complexity. The span at 2107-2120 (ITTQLPHLSSATTP) shows a compositional bias: polar residues. The segment covering 2121–2196 (VSTTNQLSSS…PTTASVSASP (76 aa)) has biased composition (low complexity). Residues 2240–2264 (HLASSTIAFPSTPRTTASTHTAPAF) are compositionally biased toward polar residues. Residues 2265–2278 (SSQSTTSRSTSLTT) show a composition bias toward low complexity. The span at 2323–2347 (LTAHGSTPASAPVSSLGTPTPTSPG) shows a compositional bias: polar residues. 4 disulfides stabilise this stretch: C2349–C2396, C2363–C2410, C2372–C2430, and C2376–C2432. In terms of domain architecture, CTCK spans 2349 to 2438 (CSVREQQEEI…HCVCSSVACG (90 aa)).

In terms of assembly, multimer; disulfide-linked. O-glycosylated. Expressed in the regenerative zone of gastric antrum, gastric body mucosa and gastric incisura mucosa. Expressed in the deeper mucous glands of gastric antrum. Overexpressed in Helicobacter pylori infected gastric epithelium. Highly expressed in duodenal Brunner's glands, gall bladder, seminal vesicle, pancreatic centroacinar cells and ducts, and periductal glands of the common bile duct.

It is found in the secreted. Functionally, may provide a mechanism for modulation of the composition of the protective mucus layer related to acid secretion or the presence of bacteria and noxious agents in the lumen. Plays an important role in the cytoprotection of epithelial surfaces and are used as tumor markers in a variety of cancers. May play a role in epithelial organogenesis. This Homo sapiens (Human) protein is Mucin-6 (MUC6).